A 361-amino-acid chain; its full sequence is [LysW]-lysine hydrolase (361 aa).

His-67 lines the Zn(2+) pocket. Asp-69 is a catalytic residue. A Zn(2+)-binding site is contributed by Asp-91. Catalysis depends on Glu-124, which acts as the Proton acceptor. 3 residues coordinate Zn(2+): Glu-125, Glu-148, and His-326.

This sequence belongs to the peptidase M20A family. LysK subfamily. Homotetramer and homooctamer. Zn(2+) serves as cofactor. It depends on Co(2+) as a cofactor.

The protein localises to the cytoplasm. It catalyses the reaction [amino-group carrier protein]-C-terminal-gamma-(L-lysyl)-L-glutamate + H2O = [amino-group carrier protein]-C-terminal-L-glutamate + L-lysine. Its pathway is amino-acid biosynthesis; L-lysine biosynthesis via AAA pathway; L-lysine from L-alpha-aminoadipate (Thermus route): step 5/5. Catalyzes the release of L-lysine from [LysW]-gamma-L-lysine. In vitro, can deacetylate both N(2)-acetyl-L-lysine and N(2)-acetyl-L-ornithine. The protein is [LysW]-lysine hydrolase of Thermus thermophilus (strain ATCC BAA-163 / DSM 7039 / HB27).